An 89-amino-acid chain; its full sequence is Transcription elongation factor 1 homolog (89 aa).

Positions 25, 28, 49, and 52 each coordinate Zn(2+).

This sequence belongs to the ELOF1 family.

It localises to the nucleus. Functionally, transcription elongation factor implicated in the maintenance of proper chromatin structure in actively transcribed regions. This chain is Transcription elongation factor 1 homolog, found in Oryza sativa subsp. japonica (Rice).